An 878-amino-acid polypeptide reads, in one-letter code: Leucine--tRNA ligase (878 aa).

The 'HIGH' region motif lies at P43–H54. The 'KMSKS' region signature appears at K634–A638. ATP is bound at residue K637.

This sequence belongs to the class-I aminoacyl-tRNA synthetase family.

Its subcellular location is the cytoplasm. It carries out the reaction tRNA(Leu) + L-leucine + ATP = L-leucyl-tRNA(Leu) + AMP + diphosphate. The protein is Leucine--tRNA ligase of Treponema pallidum subsp. pallidum (strain SS14).